The following is a 146-amino-acid chain: 3-hydroxyacyl-[acyl-carrier-protein] dehydratase FabZ (146 aa).

Residue H48 is part of the active site.

It belongs to the thioester dehydratase family. FabZ subfamily.

Its subcellular location is the cytoplasm. It carries out the reaction a (3R)-hydroxyacyl-[ACP] = a (2E)-enoyl-[ACP] + H2O. Its function is as follows. Involved in unsaturated fatty acids biosynthesis. Catalyzes the dehydration of short chain beta-hydroxyacyl-ACPs and long chain saturated and unsaturated beta-hydroxyacyl-ACPs. This chain is 3-hydroxyacyl-[acyl-carrier-protein] dehydratase FabZ, found in Acetivibrio thermocellus (strain ATCC 27405 / DSM 1237 / JCM 9322 / NBRC 103400 / NCIMB 10682 / NRRL B-4536 / VPI 7372) (Clostridium thermocellum).